The primary structure comprises 505 residues: Katanin p60 ATPase-containing subunit A-like 2 (505 aa).

In terms of domain architecture, LisH spans 25–57 (RRKNLLILIMHYLLQEGYVDSANSLEQETKISS). Disordered stretches follow at residues 94–127 (LDHD…IGQQ) and 140–167 (RTNG…EASE). Composition is skewed to polar residues over residues 114 to 127 (GSNS…IGQQ) and 155 to 164 (QESGGNSPQE). 298–305 (GPPGTGKT) contacts ATP.

This sequence belongs to the AAA ATPase family. Katanin p60 subunit A1 subfamily. A-like 2 sub-subfamily.

The protein localises to the cytoplasm. The protein resides in the cytoskeleton. It localises to the spindle. Its subcellular location is the spindle pole. It carries out the reaction n ATP + n H2O + a microtubule = n ADP + n phosphate + (n+1) alpha/beta tubulin heterodimers.. In terms of biological role, severs microtubules in vitro in an ATP-dependent manner. This activity may promote rapid reorganization of cellular microtubule arrays. In Xenopus laevis (African clawed frog), this protein is Katanin p60 ATPase-containing subunit A-like 2 (katnal2).